We begin with the raw amino-acid sequence, 255 residues long: Small ribosomal subunit protein eS1 (255 aa).

Over residues 1 to 18 (MAVGKNKRLSKGKKGLKK) the composition is skewed to basic residues. The segment at 1-22 (MAVGKNKRLSKGKKGLKKRAQD) is disordered. An N-acetylalanine; partial modification is found at alanine 2.

The protein belongs to the eukaryotic ribosomal protein eS1 family. As to quaternary structure, component of the small ribosomal subunit. Mature ribosomes consist of a small (40S) and a large (60S) subunit. The 40S subunit contains about 33 different proteins and 1 molecule of RNA (18S). The 60S subunit contains about 49 different proteins and 3 molecules of RNA (25S, 5.8S and 5S).

It localises to the cytoplasm. This is Small ribosomal subunit protein eS1 from Uncinocarpus reesii (strain UAMH 1704).